Reading from the N-terminus, the 178-residue chain is Probable host range protein 2 (178 aa).

The protein belongs to the poxviridae C7 protein family.

Plays a role for multiplication of the virus in different cell types. The sequence is that of Probable host range protein 2 from Yaba-like disease virus (YLDV).